The sequence spans 176 residues: Adenine phosphoribosyltransferase (176 aa).

The protein belongs to the purine/pyrimidine phosphoribosyltransferase family. As to quaternary structure, homodimer.

It localises to the cytoplasm. It carries out the reaction AMP + diphosphate = 5-phospho-alpha-D-ribose 1-diphosphate + adenine. Its pathway is purine metabolism; AMP biosynthesis via salvage pathway; AMP from adenine: step 1/1. Catalyzes a salvage reaction resulting in the formation of AMP, that is energically less costly than de novo synthesis. The protein is Adenine phosphoribosyltransferase of Roseobacter denitrificans (strain ATCC 33942 / OCh 114) (Erythrobacter sp. (strain OCh 114)).